Consider the following 394-residue polypeptide: Elongation factor Tu (394 aa).

One can recognise a tr-type G domain in the interval 10 to 204 (KPHVNVGTIG…HLDSYIPEPE (195 aa)). The segment at 19–26 (GHVDHGKT) is G1. 19-26 (GHVDHGKT) is a GTP binding site. Thr-26 is a Mg(2+) binding site. Residues 60-64 (GITIN) form a G2 region. Residues 81 to 84 (DCPG) form a G3 region. GTP contacts are provided by residues 81–85 (DCPGH) and 136–139 (NKCD). Residues 136–139 (NKCD) are G4. A G5 region spans residues 174–176 (SAL).

Belongs to the TRAFAC class translation factor GTPase superfamily. Classic translation factor GTPase family. EF-Tu/EF-1A subfamily. Monomer.

The protein localises to the cytoplasm. The catalysed reaction is GTP + H2O = GDP + phosphate + H(+). Its function is as follows. GTP hydrolase that promotes the GTP-dependent binding of aminoacyl-tRNA to the A-site of ribosomes during protein biosynthesis. This chain is Elongation factor Tu, found in Haemophilus ducreyi (strain 35000HP / ATCC 700724).